Consider the following 124-residue polypeptide: Large ribosomal subunit protein bL19 (124 aa).

The protein belongs to the bacterial ribosomal protein bL19 family.

Its function is as follows. This protein is located at the 30S-50S ribosomal subunit interface and may play a role in the structure and function of the aminoacyl-tRNA binding site. In Cereibacter sphaeroides (strain ATCC 17029 / ATH 2.4.9) (Rhodobacter sphaeroides), this protein is Large ribosomal subunit protein bL19.